Consider the following 67-residue polypeptide: Large ribosomal subunit protein bL35 (67 aa).

It belongs to the bacterial ribosomal protein bL35 family.

This is Large ribosomal subunit protein bL35 from Leptothrix cholodnii (strain ATCC 51168 / LMG 8142 / SP-6) (Leptothrix discophora (strain SP-6)).